The sequence spans 400 residues: Probable peptidoglycan glycosyltransferase FtsW (400 aa).

Topologically, residues 1 to 29 are cytoplasmic; sequence MVIERIKHLASPLQDWVFTPSPKVMFDRQ. Residues 30–50 traverse the membrane as a helical segment; that stretch reads LIWIALGLMLTGLVMVASASF. At 51–60 the chain is on the periplasmic side; that stretch reads PISTRLTGQP. Residues 61 to 81 form a helical membrane-spanning segment; the sequence is FHFMMRHMLFVFLALSISSIV. Residues 82-95 are Cytoplasmic-facing; the sequence is LRIELNKWLKYSSH. A helical membrane pass occupies residues 96–116; the sequence is LLLISLLLLAAVLVVGKSVNG. At 117 to 122 the chain is on the periplasmic side; the sequence is AARWLP. Residues 123–143 form a helical membrane-spanning segment; sequence LGIFNLQPAEVAKLSLFVFIA. The Cytoplasmic portion of the chain corresponds to 144-155; the sequence is GYLVRRHGEVRD. A helical membrane pass occupies residues 156–176; the sequence is SFRGFVKPLLVLITLAFFLLM. Over 177-178 the chain is Periplasmic; that stretch reads QP. The chain crosses the membrane as a helical span at residues 179–199; that stretch reads DLGTTVVMFVTTIAMLFIAGA. Residue Lys-200 is a topological domain, cytoplasmic. The chain crosses the membrane as a helical span at residues 201-221; the sequence is LWQFIALVMGGISLVIVLILA. Residues 222–290 are Periplasmic-facing; it reads EPYRMRRVTS…VFAVIAEELG (69 aa). Residues 291 to 311 form a helical membrane-spanning segment; that stretch reads FVGVCLVLCLIFALVFKALLI. Residues 312–321 are Cytoplasmic-facing; sequence GRKCLAHDQR. A helical transmembrane segment spans residues 322 to 342; sequence FGGFLAFGIGIWFAFQTLVNV. The Periplasmic segment spans residues 343-356; the sequence is GAAAGIVPTKGLTL. Residues 357–377 traverse the membrane as a helical segment; that stretch reads PLISYGGSSLIIMSVAVSLLI. Residues 378–400 lie on the Cytoplasmic side of the membrane; that stretch reads RIDHECRVYLANEPPRSENEEQK.

It belongs to the SEDS family. FtsW subfamily.

It is found in the cell inner membrane. It carries out the reaction [GlcNAc-(1-&gt;4)-Mur2Ac(oyl-L-Ala-gamma-D-Glu-L-Lys-D-Ala-D-Ala)](n)-di-trans,octa-cis-undecaprenyl diphosphate + beta-D-GlcNAc-(1-&gt;4)-Mur2Ac(oyl-L-Ala-gamma-D-Glu-L-Lys-D-Ala-D-Ala)-di-trans,octa-cis-undecaprenyl diphosphate = [GlcNAc-(1-&gt;4)-Mur2Ac(oyl-L-Ala-gamma-D-Glu-L-Lys-D-Ala-D-Ala)](n+1)-di-trans,octa-cis-undecaprenyl diphosphate + di-trans,octa-cis-undecaprenyl diphosphate + H(+). Its pathway is cell wall biogenesis; peptidoglycan biosynthesis. Its function is as follows. Peptidoglycan polymerase that is essential for cell division. This chain is Probable peptidoglycan glycosyltransferase FtsW, found in Aliivibrio salmonicida (strain LFI1238) (Vibrio salmonicida (strain LFI1238)).